Reading from the N-terminus, the 589-residue chain is Inactive poly [ADP-ribose] polymerase RCD1 (589 aa).

Residues Lys-64 to Trp-153 form the WWE domain. One can recognise a PARP catalytic domain in the interval Glu-248–Val-469. Disordered stretches follow at residues Arg-464–Lys-504 and Gln-569–Leu-589. The segment covering Leu-481 to Pro-503 has biased composition (polar residues). In terms of domain architecture, RST spans Thr-501–Ser-572. A compositionally biased stretch (basic and acidic residues) spans Lys-571 to Leu-589.

Interacts with the transcription factors NAC013/NTL1 and NAC046. Interacts with dehydration-responsive DREB2 proteins and a number of transcription factors belonging to several protein families. Interacts with turnip crinkle virus (TCV) movement protein P8. In terms of tissue distribution, expressed in young developing tissues, such as young leaves and flowers and root tips. In mature plants, expressed in vasculature of leaves and roots, and guard cells.

It is found in the nucleus matrix. Inactive ADP-ribosyltransferase that functions with SRO1 to regulate oxidative stress, hormonal and developmental responses. Required for embryogenesis, vegetative and reproductive development, and abiotic stress responses. May regulate several stress-responsive genes. Seems to play a larger developmental role than SRO1. Does not bind NAD in vitro. This Arabidopsis thaliana (Mouse-ear cress) protein is Inactive poly [ADP-ribose] polymerase RCD1 (RCD1).